A 334-amino-acid chain; its full sequence is Thiamine-binding periplasmic protein (334 aa).

The signal sequence occupies residues 1 to 23 (MRLLSLLTFSLFAVIGLAPAAQA). Residues 64 to 65 (DG), 166 to 167 (AT), Trp202, and 220 to 223 (YTTS) contribute to the thiamine site.

It belongs to the bacterial solute-binding protein 1 family. The complex is composed of two ATP-binding proteins (ThiQ), two transmembrane proteins (ThiP) and a solute-binding protein (ThiB).

The protein resides in the periplasm. Functionally, part of the ABC transporter complex ThiBPQ involved in thiamine import. This chain is Thiamine-binding periplasmic protein (thiB), found in Brucella melitensis biotype 1 (strain ATCC 23456 / CCUG 17765 / NCTC 10094 / 16M).